Consider the following 297-residue polypeptide: Trimeric intracellular cation channel type A (297 aa).

Residues 1-18 lie on the Lumenal side of the membrane; it reads MDLISSLSLGELALSFSR. Residues 19–39 traverse the membrane as a helical segment; the sequence is VPLFPVFDLSYFIVSIIYLKY. The Cytoplasmic portion of the chain corresponds to 40–51; it reads EPGSVELSRRHP. The chain crosses the membrane as a helical span at residues 52–72; the sequence is VASWLCAMLHCFGSYILADLL. Residues 73-85 are Lumenal-facing; that stretch reads LGEPIIDYFSNSS. Gly-74 provides a ligand contact to Ca(2+). A helical transmembrane segment spans residues 86–106; it reads SILLASGVWYLIFFCPLDLFY. Over 107-143 the chain is Cytoplasmic; the sequence is KCVCFLPVKLIFVAMKEVVRVRKIAVGIHHAHHYHHG. Lys-122 and Arg-126 together coordinate a 1,2-diacyl-sn-glycero-3-phospho-(1D-myo-inositol-4,5-bisphosphate). A helical transmembrane segment spans residues 144–164; it reads WFIMIATGWVKGSGVALLSNL. The Lumenal portion of the chain corresponds to 165 to 177; the sequence is EQLLRGVWKPETN. A helical transmembrane segment spans residues 178–198; that stretch reads EILHMSFPTKASLYGAILFTL. Topologically, residues 199 to 208 are cytoplasmic; it reads QQTRWLPVSK. Residues 209 to 229 form a helical membrane-spanning segment; sequence ASLIFVFTMFMVSCKVFLTAT. The Lumenal portion of the chain corresponds to 230–233; the sequence is HSHS. A helical membrane pass occupies residues 234-254; it reads SPFDVLEGYICPVLFGATWGG. At 255 to 297 the chain is on the cytoplasmic side; it reads DHHHDNHGAPHGMGLGTQHSGLPAKAKEELSEGFRKKKTKKAD. The interval 259–297 is disordered; that stretch reads DNHGAPHGMGLGTQHSGLPAKAKEELSEGFRKKKTKKAD. The segment covering 279–288 has biased composition (basic and acidic residues); that stretch reads KAKEELSEGF.

It belongs to the TMEM38 family. Homotrimer; conformation seems to be controled by binding to diacylglycerol (DAG).

It is found in the sarcoplasmic reticulum membrane. The protein localises to the nucleus membrane. It carries out the reaction K(+)(in) = K(+)(out). Channel activity is activated by a change of voltage within the sarcoplasmic reticulum lumen and blocked by luminal high Ca(2+) levels. Functionally, intracellular monovalent cation channel required for maintenance of rapid intracellular calcium release. Acts as a potassium counter-ion channel that functions in synchronization with calcium release from intracellular stores. Opened by a change of voltage within the sarcoplasmic reticulum lumen. This is Trimeric intracellular cation channel type A from Rattus norvegicus (Rat).